The primary structure comprises 616 residues: Dihydroxy-acid dehydratase (616 aa).

Aspartate 81 is a Mg(2+) binding site. Residue cysteine 122 coordinates [2Fe-2S] cluster. Positions 123 and 124 each coordinate Mg(2+). Residue lysine 124 is modified to N6-carboxylysine. Residue cysteine 195 coordinates [2Fe-2S] cluster. Glutamate 491 contacts Mg(2+). The active-site Proton acceptor is serine 517.

This sequence belongs to the IlvD/Edd family. Homodimer. The cofactor is [2Fe-2S] cluster. It depends on Mg(2+) as a cofactor.

It catalyses the reaction (2R)-2,3-dihydroxy-3-methylbutanoate = 3-methyl-2-oxobutanoate + H2O. The enzyme catalyses (2R,3R)-2,3-dihydroxy-3-methylpentanoate = (S)-3-methyl-2-oxopentanoate + H2O. It participates in amino-acid biosynthesis; L-isoleucine biosynthesis; L-isoleucine from 2-oxobutanoate: step 3/4. The protein operates within amino-acid biosynthesis; L-valine biosynthesis; L-valine from pyruvate: step 3/4. Functionally, functions in the biosynthesis of branched-chain amino acids. Catalyzes the dehydration of (2R,3R)-2,3-dihydroxy-3-methylpentanoate (2,3-dihydroxy-3-methylvalerate) into 2-oxo-3-methylpentanoate (2-oxo-3-methylvalerate) and of (2R)-2,3-dihydroxy-3-methylbutanoate (2,3-dihydroxyisovalerate) into 2-oxo-3-methylbutanoate (2-oxoisovalerate), the penultimate precursor to L-isoleucine and L-valine, respectively. The protein is Dihydroxy-acid dehydratase of Shigella sonnei (strain Ss046).